Consider the following 143-residue polypeptide: Hemoglobin cathodic subunit alpha (143 aa).

An N-acetylserine modification is found at Ser-1. Positions 1–143 (SLAPGDKTVV…VCAALSDKYR (143 aa)) constitute a Globin domain. His-59 contributes to the O2 binding site. His-89 serves as a coordination point for heme b.

Belongs to the globin family. As to quaternary structure, heterotetramer of two alpha chains and two beta chains. Red blood cells.

Functionally, involved in oxygen transport from gills to the various peripheral tissues. The protein is Hemoglobin cathodic subunit alpha of Gymnothorax unicolor (Brown moray).